The chain runs to 96 residues: DNA-directed RNA polymerase subunit Rpo11 (96 aa).

Belongs to the archaeal Rpo11/eukaryotic RPB11/RPC19 RNA polymerase subunit family. Part of the RNA polymerase complex.

The protein resides in the cytoplasm. The enzyme catalyses RNA(n) + a ribonucleoside 5'-triphosphate = RNA(n+1) + diphosphate. DNA-dependent RNA polymerase (RNAP) catalyzes the transcription of DNA into RNA using the four ribonucleoside triphosphates as substrates. This is DNA-directed RNA polymerase subunit Rpo11 from Haloquadratum walsbyi (strain DSM 16790 / HBSQ001).